The sequence spans 673 residues: DNA mismatch repair protein MutL (673 aa).

It belongs to the DNA mismatch repair MutL/HexB family.

In terms of biological role, this protein is involved in the repair of mismatches in DNA. It is required for dam-dependent methyl-directed DNA mismatch repair. May act as a 'molecular matchmaker', a protein that promotes the formation of a stable complex between two or more DNA-binding proteins in an ATP-dependent manner without itself being part of a final effector complex. This Ehrlichia chaffeensis (strain ATCC CRL-10679 / Arkansas) protein is DNA mismatch repair protein MutL.